The chain runs to 229 residues: Phosphoglycolate phosphatase (229 aa).

The Nucleophile role is filled by D18. Residues D18, D20, and D176 each contribute to the Mg(2+) site.

The protein belongs to the HAD-like hydrolase superfamily. CbbY/CbbZ/Gph/YieH family. Mg(2+) is required as a cofactor.

It carries out the reaction 2-phosphoglycolate + H2O = glycolate + phosphate. It functions in the pathway organic acid metabolism; glycolate biosynthesis; glycolate from 2-phosphoglycolate: step 1/1. Specifically catalyzes the dephosphorylation of 2-phosphoglycolate. Is involved in the dissimilation of the intracellular 2-phosphoglycolate formed during the DNA repair of 3'-phosphoglycolate ends, a major class of DNA lesions induced by oxidative stress. The protein is Phosphoglycolate phosphatase of Xylella fastidiosa (strain Temecula1 / ATCC 700964).